The chain runs to 186 residues: Protein FAM9B (186 aa).

The segment at 1–93 (MAAWGKKHAG…KHALRKKQLK (93 aa)) is disordered. Basic and acidic residues-rich tracts occupy residues 10-27 (GKDPVRDECEERNRFTET) and 34-58 (DEHGEREPFAETDEHTGANTKKPED). Positions 66 to 93 (KRKRMKMDKTCSKTKNKSKHALRKKQLK) are enriched in basic residues.

The protein belongs to the XLR/SYCP3 family. Expressed in testis and ovary (at protein level).

It is found in the nucleus. It localises to the cytoplasm. The protein localises to the chromosome. Its function is as follows. May play a role in meiosis. This Homo sapiens (Human) protein is Protein FAM9B.